The primary structure comprises 268 residues: MSNKVHLGHTARKRFGQNFLTDGNVINRIVGAIAPDNNHVMVEIGPGLGALTEPVAMAVDNLTVVELDRDLVERLHKHPVLKDKLTIHQGDALQFDFSQLVVPGKKLKVFGNLPYNISTPLMFHLFEFAEQIETMHFMLQKEVVLRLSASPGCKAYGRLTVMAQYFCQVVPVLEVPPHSFTPAPKVDSAVVRLLPYAEKPFPCKDVNVLRQLCTTAFNMRRKTLRNNLKHMLSDAEFEQLGIDQSQRPEQISVEQYVAMANMICDRKA.

Positions 18, 20, 45, 66, 91, and 112 each coordinate S-adenosyl-L-methionine.

This sequence belongs to the class I-like SAM-binding methyltransferase superfamily. rRNA adenine N(6)-methyltransferase family. RsmA subfamily.

The protein localises to the cytoplasm. The catalysed reaction is adenosine(1518)/adenosine(1519) in 16S rRNA + 4 S-adenosyl-L-methionine = N(6)-dimethyladenosine(1518)/N(6)-dimethyladenosine(1519) in 16S rRNA + 4 S-adenosyl-L-homocysteine + 4 H(+). Its function is as follows. Specifically dimethylates two adjacent adenosines (A1518 and A1519) in the loop of a conserved hairpin near the 3'-end of 16S rRNA in the 30S particle. May play a critical role in biogenesis of 30S subunits. This Shewanella putrefaciens (strain CN-32 / ATCC BAA-453) protein is Ribosomal RNA small subunit methyltransferase A.